The sequence spans 89 residues: MVTAVAAKEEPVTSFAKDQLRAIIERIERLEEEKKTISDDIRDVYAEAKGNGYDVKALRTIVRMRKQDANERQEQETILETYMHALGML.

Belongs to the UPF0335 family.

The protein is UPF0335 protein Nwi_0989 of Nitrobacter winogradskyi (strain ATCC 25391 / DSM 10237 / CIP 104748 / NCIMB 11846 / Nb-255).